The sequence spans 261 residues: MKTYHLNNDIIVTQEQLDHWNEQLIKLETPQEIIAWSIVTFPHLFQTTAFGLTGLVTIDMLSKLSEKYYMPELLFIDTLHHFPQTLTLKNEIEKKYYQPKNQTIHVYKPDGCESEADFASKYGDFLWEKDDDKYDYLAKVEPAHRAYKELHISAVFTGRRKSQGSARSQLSIIEIDELNGILKINPLINWTFEQVKQYIDANNVPYNELLDLGYRSIGDYHSTQPVKEGEDERAGRWKGKAKTECGIHEASRFAQFLKQDA.

It belongs to the PAPS reductase family. CysH subfamily.

It catalyses the reaction [thioredoxin]-disulfide + sulfite + adenosine 3',5'-bisphosphate + 2 H(+) = [thioredoxin]-dithiol + 3'-phosphoadenylyl sulfate. The protein operates within sulfur metabolism; hydrogen sulfide biosynthesis; sulfite from sulfate: step 3/3. In terms of biological role, the NADP dependent reduction of PAPS into sulfite involves thioredoxin which probably plays the role of a thiol carrier. The polypeptide is Phosphoadenosine phosphosulfate reductase (MET16) (Saccharomyces cerevisiae (strain ATCC 204508 / S288c) (Baker's yeast)).